We begin with the raw amino-acid sequence, 554 residues long: Glutamine--tRNA ligase (554 aa).

The 'HIGH' region motif lies at 34 to 44 (PEPNGYLHIGH). Residues 35–37 (EPN) and 41–47 (HIGHAKS) each bind ATP. L-glutamine is bound by residues Asp-67 and Tyr-212. Residues Thr-231, 261–262 (RL), and 269–271 (MSK) each bind ATP. The 'KMSKS' region signature appears at 268–272 (VMSKR). Residues 317–324 (TKQDNTIE) form an interaction with tRNA region.

It belongs to the class-I aminoacyl-tRNA synthetase family. In terms of assembly, monomer.

The protein localises to the cytoplasm. The enzyme catalyses tRNA(Gln) + L-glutamine + ATP = L-glutaminyl-tRNA(Gln) + AMP + diphosphate. The sequence is that of Glutamine--tRNA ligase from Shigella boydii serotype 18 (strain CDC 3083-94 / BS512).